The sequence spans 213 residues: Ras-related protein Rab-25 (213 aa).

Ser21, Gly24, Lys25, Thr26, Asn27, Ser38, His39, Thr43, and Thr44 together coordinate GTP. Mg(2+) is bound at residue Thr26. Short sequence motifs (switch) lie at residues 35–49 (NEFS…GVEF) and 67–84 (DTAG…YYRG). Mg(2+) contacts are provided by Thr44 and Asp67. Residues Gly70, Asn125, Lys126, Asp128, Ala156, and Leu157 each contribute to the GTP site. Residues Cys209 and Cys210 are each lipidated (S-geranylgeranyl cysteine). The residue at position 210 (Cys210) is a Cysteine methyl ester. The propeptide at 211–213 (ISL) is removed in mature form.

Belongs to the small GTPase superfamily. Rab family. In terms of assembly, interacts (GTP-bound form) with RAB11FIP1, RAB11FIP2, RAB11FIP3 and RAB11FIP4. Interacts (via the hypervariable C-terminal region) with ITGB1 (via the cytoplasmic region); the interaction is GTP-dependent. Interacts with ITGAV. Associates with the integrin alpha-V/beta-1 heterodimer. Interacts with VPS33B. It depends on Mg(2+) as a cofactor.

Its subcellular location is the cell membrane. The protein resides in the cell projection. It is found in the pseudopodium membrane. It localises to the cytoplasmic vesicle. It catalyses the reaction GTP + H2O = GDP + phosphate + H(+). With respect to regulation, regulated by guanine nucleotide exchange factors (GEFs) which promote the exchange of bound GDP for free GTP. Regulated by GTPase activating proteins (GAPs) which increase the GTP hydrolysis activity. Inhibited by GDP dissociation inhibitors (GDIs) which prevent Rab-GDP dissociation. The small GTPases Rab are key regulators of intracellular membrane trafficking, from the formation of transport vesicles to their fusion with membranes. Rabs cycle between an inactive GDP-bound form and an active GTP-bound form that is able to recruit to membranes different set of downstream effectors directly responsible for vesicle formation, movement, tethering and fusion. RAB25 regulates epithelial cell differentiation, proliferation and survival, thereby playing key roles in tumorigenesis. Promotes invasive migration of cells in which it functions to localize and maintain integrin alpha-V/beta-1 at the tips of extending pseudopodia. Involved in the regulation of epithelial morphogenesis through the control of CLDN4 expression and localization at tight junctions. May selectively regulate the apical recycling pathway. Together with MYO5B regulates transcytosis. The protein is Ras-related protein Rab-25 of Mus musculus (Mouse).